The chain runs to 278 residues: MAEALRRVLNAGCAARPGEDGAAGPPLLLLGAPRSAQTSLLFAAALEAAGEGRGSVLFVTRRPLQSLPLSTPTAREHWRLQKVRFQYPSSIQELLQLLASAHEAPAPTPSLLLLDGLEEYLAEDPSAQEAAYLAALLLDTAAFFSHRLGANGSCGLVVALETQKEAEADAPHLPLLKRYFPAQCWLQPDALGLGQHCCLRASLELGKLSPRTEWSVSFLPCGEMKVTPWLAQASKLSPEKKDSSAGSQSLTLGCDNLPGPGSPLDGILTSETGADSKT.

A disordered region spans residues 237 to 278 (SPEKKDSSAGSQSLTLGCDNLPGPGSPLDGILTSETGADSKT). Polar residues predominate over residues 269–278 (TSETGADSKT).

As to quaternary structure, interacts with ZSWIM7; they form a functional complex involved in homologous recombination repair and stabilize each other. Interacts with RAD51, RAD51B, RAD51C, RAD51D and XRCC3; involved in homologous recombination repair.

It localises to the nucleus. ATPase which is preferentially stimulated by single-stranded DNA and is involved in homologous recombination repair (HRR). Has a DNA-binding activity which is independent of its ATPase activity. The polypeptide is ATPase SWSAP1 (Swsap1) (Mus musculus (Mouse)).